The following is a 143-amino-acid chain: UPF0201 protein Pcal_0593 (143 aa).

It belongs to the UPF0201 family.

The chain is UPF0201 protein Pcal_0593 from Pyrobaculum calidifontis (strain DSM 21063 / JCM 11548 / VA1).